A 332-amino-acid polypeptide reads, in one-letter code: Oligopeptide transport ATP-binding protein OppF (332 aa).

The ABC transporter domain maps to 23 to 264; sequence KNDKSLFFAK…TKHPYTKALM (242 aa). 56 to 63 serves as a coordination point for ATP; that stretch reads GESGCGKS.

This sequence belongs to the ABC transporter superfamily. The complex is composed of two ATP-binding proteins (OppD and OppF), two transmembrane proteins (OppB and OppC) and a solute-binding protein (OppA).

The protein resides in the cell inner membrane. It catalyses the reaction a [peptide](out) + ATP + H2O = a [peptide](in) + ADP + phosphate + H(+). Its function is as follows. Part of the ABC transporter complex OppABCDF involved in the uptake of oligopeptides. Probably responsible for energy coupling to the transport system. This Haemophilus influenzae (strain ATCC 51907 / DSM 11121 / KW20 / Rd) protein is Oligopeptide transport ATP-binding protein OppF (oppF).